The primary structure comprises 457 residues: Siroheme synthase (457 aa).

Residues 1–204 form a precorrin-2 dehydrogenase /sirohydrochlorin ferrochelatase region; the sequence is MDHLPIFCQL…NDQKAITETT (204 aa). NAD(+)-binding positions include 22–23 and 43–44; these read DV and LA. Residue serine 128 is modified to Phosphoserine. The interval 216–457 is uroporphyrinogen-III C-methyltransferase; sequence GEVVLVGAGP…RDKLNWFSNH (242 aa). Proline 225 is a binding site for S-adenosyl-L-methionine. Aspartate 248 (proton acceptor) is an active-site residue. The active-site Proton donor is lysine 270. Residues 301–303, isoleucine 306, 331–332, methionine 382, and glycine 411 each bind S-adenosyl-L-methionine; these read GGD and TA.

The protein in the N-terminal section; belongs to the precorrin-2 dehydrogenase / sirohydrochlorin ferrochelatase family. It in the C-terminal section; belongs to the precorrin methyltransferase family.

The catalysed reaction is uroporphyrinogen III + 2 S-adenosyl-L-methionine = precorrin-2 + 2 S-adenosyl-L-homocysteine + H(+). It carries out the reaction precorrin-2 + NAD(+) = sirohydrochlorin + NADH + 2 H(+). The enzyme catalyses siroheme + 2 H(+) = sirohydrochlorin + Fe(2+). Its pathway is cofactor biosynthesis; adenosylcobalamin biosynthesis; precorrin-2 from uroporphyrinogen III: step 1/1. It functions in the pathway cofactor biosynthesis; adenosylcobalamin biosynthesis; sirohydrochlorin from precorrin-2: step 1/1. The protein operates within porphyrin-containing compound metabolism; siroheme biosynthesis; precorrin-2 from uroporphyrinogen III: step 1/1. It participates in porphyrin-containing compound metabolism; siroheme biosynthesis; siroheme from sirohydrochlorin: step 1/1. Its pathway is porphyrin-containing compound metabolism; siroheme biosynthesis; sirohydrochlorin from precorrin-2: step 1/1. Functionally, multifunctional enzyme that catalyzes the SAM-dependent methylations of uroporphyrinogen III at position C-2 and C-7 to form precorrin-2 via precorrin-1. Then it catalyzes the NAD-dependent ring dehydrogenation of precorrin-2 to yield sirohydrochlorin. Finally, it catalyzes the ferrochelation of sirohydrochlorin to yield siroheme. The protein is Siroheme synthase of Shigella boydii serotype 18 (strain CDC 3083-94 / BS512).